Here is a 441-residue protein sequence, read N- to C-terminus: Zinc finger and BTB domain-containing protein 8A (441 aa).

The 69-residue stretch at C24–G92 folds into the BTB domain. Polar residues-rich tracts occupy residues N143 to Q170 and K178 to P196. Residues N143–A251 form a disordered region. Phosphoserine occurs at positions 161 and 167. Residues K178, K182, K191, and K199 each participate in a glycyl lysine isopeptide (Lys-Gly) (interchain with G-Cter in SUMO2) cross-link. Basic and acidic residues predominate over residues A198 to K208. Over residues S234–S243 the composition is skewed to low complexity. 2 C2H2-type zinc fingers span residues F282 to H304 and Y310 to H333. A Glycyl lysine isopeptide (Lys-Gly) (interchain with G-Cter in SUMO2) cross-link involves residue K437.

The protein resides in the nucleus. In terms of biological role, may be involved in transcriptional regulation. In Homo sapiens (Human), this protein is Zinc finger and BTB domain-containing protein 8A (ZBTB8A).